The chain runs to 158 residues: Eukaryotic translation initiation factor 5A-1 (158 aa).

Over residues 1-10 the composition is skewed to basic and acidic residues; the sequence is MSDEEHHFES. A disordered region spans residues 1-21; the sequence is MSDEEHHFESSDAGASKTYPQ. S2 is modified (phosphoserine). A Hypusine modification is found at K51.

It belongs to the eIF-5A family. Post-translationally, lys-51 undergoes hypusination, a unique post-translational modification that consists in the addition of a butylamino group from spermidine to lysine side chain, leading to the formation of the unusual amino acid hypusine. eIF-5As are the only known proteins to undergo this modification, which is essential for their function. In terms of tissue distribution, expressed in leaf vasculature and inflorescence stems. Present in xylem tissue but not in phloem, and in developing vessel members, but not in mature vessels members. Detected in anthers.

Translation factor that promotes translation elongation and termination, particularly upon ribosome stalling at specific amino acid sequence contexts. Binds between the exit (E) and peptidyl (P) site of the ribosome and promotes rescue of stalled ribosome: specifically required for efficient translation of polyproline-containing peptides as well as other motifs that stall the ribosome. Acts as a ribosome quality control (RQC) cofactor by joining the RQC complex to facilitate peptidyl transfer during CAT tailing step. Involved in xylogenesis. In Arabidopsis thaliana (Mouse-ear cress), this protein is Eukaryotic translation initiation factor 5A-1 (ELF5A-1).